The sequence spans 283 residues: 32 kDa beta-galactoside-binding lectin (283 aa).

2 Galectin domains span residues 17-148 and 156-283; these read YRSL…VHWG and YESG…IQIQ. Position 217–223 (217–223) interacts with a beta-D-galactoside; sequence WGNEERE.

As to quaternary structure, (Microbial infection) Interacts (via domain galectin 2) with goat TMEM147. Interacts (via domain galectin 1) with goat TMEM63A.

The protein localises to the membrane. Its function is as follows. Binds galactose. Exerts immunomodulatory effects on host peripheral blood mononuclear cells to down-regulate host immune response. Hemagglutinates human, dog, rabbit, chicken and mouse erythrocytes but does not hemagglutinate the erythrocytes of goat, its natural host. The protein is 32 kDa beta-galactoside-binding lectin (GAL-1) of Haemonchus contortus (Barber pole worm).